A 403-amino-acid chain; its full sequence is S-adenosylmethionine synthase (403 aa).

An ATP-binding site is contributed by His17. Residue Asp19 coordinates Mg(2+). Position 45 (Glu45) interacts with K(+). Positions 58 and 104 each coordinate L-methionine. Residues 104–114 (QSPDIAQGVDT) form a flexible loop region. ATP-binding positions include 179-181 (DGK), 250-251 (KF), Asp259, 265-266 (RK), Ala282, and Lys286. Asp259 serves as a coordination point for L-methionine. Lys290 provides a ligand contact to L-methionine.

It belongs to the AdoMet synthase family. As to quaternary structure, homotetramer; dimer of dimers. Requires Mg(2+) as cofactor. K(+) serves as cofactor.

It is found in the cytoplasm. The catalysed reaction is L-methionine + ATP + H2O = S-adenosyl-L-methionine + phosphate + diphosphate. Its pathway is amino-acid biosynthesis; S-adenosyl-L-methionine biosynthesis; S-adenosyl-L-methionine from L-methionine: step 1/1. Its function is as follows. Catalyzes the formation of S-adenosylmethionine (AdoMet) from methionine and ATP. The overall synthetic reaction is composed of two sequential steps, AdoMet formation and the subsequent tripolyphosphate hydrolysis which occurs prior to release of AdoMet from the enzyme. The protein is S-adenosylmethionine synthase of Mycobacterium bovis (strain ATCC BAA-935 / AF2122/97).